A 398-amino-acid chain; its full sequence is Lysophospholipid acyltransferase LPEAT1 (398 aa).

Positions 1–24 (MESELKDLNSNSNPPSSKEDRPLL) are disordered. S28 carries the post-translational modification Phosphoserine. Residues 66-86 (LAVALVTLVPLRFLLSMSILL) form a helical membrane-spanning segment. The interval 158–185 (RDSDMDSNPKTTSTEINQKGEAATEEPE) is disordered. Positions 163–174 (DSNPKTTSTEIN) are enriched in polar residues. Positions 194–199 (HVSYLD) match the HXXXXD motif motif.

It belongs to the 1-acyl-sn-glycerol-3-phosphate acyltransferase family.

Its subcellular location is the endoplasmic reticulum membrane. It catalyses the reaction a 1-acyl-sn-glycero-3-phosphoethanolamine + an acyl-CoA = a 1,2-diacyl-sn-glycero-3-phosphoethanolamine + CoA. The enzyme catalyses a 1-acyl-sn-glycero-3-phosphate + an acyl-CoA = a 1,2-diacyl-sn-glycero-3-phosphate + CoA. It carries out the reaction a 1-acyl-sn-glycero-3-phosphocholine + an acyl-CoA = a 1,2-diacyl-sn-glycero-3-phosphocholine + CoA. The catalysed reaction is a 1-acyl-sn-glycero-3-phospho-L-serine + an acyl-CoA = a 1,2-diacyl-sn-glycero-3-phospho-L-serine + CoA. Its pathway is lipid metabolism; phospholipid metabolism. Functionally, possesses acyl-CoA-dependent lysophospholipid acyltransferase activity with a subset of lysophospholipids as substrates. Exhibits strong acylation activity on lysophosphatidylethanolamine (LPE) and lysophosphatidate (LPA), and lower activity on lysophosphatidylcholine (LPC) and lysophosphatidylserine (LPS). Exhibits acylation activity on both LPE and LPC. Has a preference for 18:1-LPE over 16:0-LPE as acceptor. Palmitoyl-CoA (16:0-CoA) is a better acyl donor than oleoyl-CoA (18:1-CoA). Among several different acyl-CoA species the best acyl donor is palmitoyl-CoA (16:0-CoA). Activity is calcium-independent. Its activity is essential for maintaining adequate levels of phosphatidylethanolamine (PE), LPE and LPC in the cells, which is crucial for plant growth regulation. The chain is Lysophospholipid acyltransferase LPEAT1 from Arabidopsis thaliana (Mouse-ear cress).